The sequence spans 372 residues: MPLPDFHVSEPFTLGIELEMLVVNPPGYDLSQDSSILIDAVKNKITAGEVKHDITESMLELATDVCRDINQAAGQFSAMQKVVLQAAADHHLEICGGGTHPFQKWQRQEVCDNERYQRTLENFGYLIQQVTVFGQHVHVGCASGDDAIYLLHGLSRFVPHFIALSAASPYMQGTDTRFASSRPNIFSAFPDNGPMPWVSNWQQFEALFRCLSYTTMIDSIKDLHWDIRPSPHFGTVEVRVMDTPLTLSHAVNMAGLIQATAHWLLTERPFKHQEKDYLLYKFNRFQACRYGLEGVITDPHTGDRRPLTEDTLRLLEKIAPSAHKIGASSAIEALHRQVVSGLNEAQLMRDFVADGGSLIGLVKKHCEIWAGD.

Belongs to the glutamate--cysteine ligase type 2 family. YbdK subfamily. As to quaternary structure, homodimer.

The enzyme catalyses L-cysteine + L-glutamate + ATP = gamma-L-glutamyl-L-cysteine + ADP + phosphate + H(+). Its function is as follows. ATP-dependent carboxylate-amine ligase which exhibits weak glutamate--cysteine ligase activity. This chain is Putative glutamate--cysteine ligase 2 (ybdK), found in Shigella boydii serotype 4 (strain Sb227).